Reading from the N-terminus, the 199-residue chain is CASP-like protein 2B1 (199 aa).

At 1–26 (MSYLGVGLSPVNVAGTKMKLMDRKVR) the chain is on the cytoplasmic side. A helical transmembrane segment spans residues 27–47 (LTELILRCSVCALALVAAILI). Over 48 to 69 (ATDTQVKEIFTIQKKAKYTDMK) the chain is Extracellular. A helical transmembrane segment spans residues 70–90 (ALVFLVVVNGIAAAYSLLHMV). Over 91–106 (RCVVGMMKGSVLFSKP) the chain is Cytoplasmic. Residues 107–127 (LAWAIFSGDQAIAYLTVAGVA) form a helical membrane-spanning segment. The Extracellular portion of the chain corresponds to 128–164 (AAAQSAAFAKLGEPELQWMKICTIYGKFCNQVGEGIA). The helical transmembrane segment at 165–185 (TALLASIGMVLISSISAFALF) threads the bilayer. Over 186–199 (RLYGGNKAQQGSRW) the chain is Cytoplasmic.

This sequence belongs to the Casparian strip membrane proteins (CASP) family. Homodimer and heterodimers.

It is found in the cell membrane. In Eutrema halophilum (Salt cress), this protein is CASP-like protein 2B1.